The sequence spans 808 residues: MFNPANQTHFSLSLDGLRHDLQVLEFSGHEGISRPYRFELELVSERAGLDLEALMHRPAFLAFTPQGQGVHGLVYGAAQGDAGKRLTRYRLTLVPHLAYLAQRNNQRIFQHLTVPQIVALILEEHGILADAYRFQLGTRYPEREYCVQYDESDLHFVQRLCAEEGIHFHFRHSAEAHLLVFGDDQTVFPRLGRPTAYVHDSGLVADEPVIKRFSLRLASRTTRTTRRDYDFEKPRLLLEAGNRPAADAPAEPDLEDYDYPGRFVDRQRGKLLSQRALERHRADRRLGEGVSDQPLLVSGHFLEIAEHPRAEWNDLWLLSEVFHEGKQPQVLEENVTSDTSASTDDFQQGYRNRFLATPWEVFFRPPLEHPKPRVLGSQTAVVTGPPGEEIHCDRYGRVRVQFHWDREGQGDDKSSCWLRVASGWAGNGYGGIVIPRVGMEVLVDFLEGDPDQPLVSGCVYHAAHPVPYELPANQTRSVFKSLSSPGGDGYNELRIEDRKGQEQIFVHAQRDWDENIEHDQKIRVGHERHDTVEANSYSEFKAEEHHTVHGERKVELKADDHLTVGDSQHVKLGRAYLARAGREIHLKAGQKMVIEADSELTVKAGGSFIRLDASGIAISGPLARINAGGAPGSGSGIAIKMPLTPGAADADVAGRPLQPANAGLHASDPKQNGEYRFDIRLQDIPGDEGFPLIHTPWRIVQGKEHNLVLEGESDEKGRLVLDDTQQRQLSNACERAPGDVWLVYPGQRIGIRPHREREGWDATRHALGALDFHDTLGGQRAPTPLEHQRGKLDSCCEGDLYSHLLAKD.

It belongs to the VgrG protein family.

Its subcellular location is the secreted. Part of the H2 type VI secretion system (H2-T6SS) specialized secretion system, which delivers several virulence factors in both prokaryotic and eukaryotic cells during infection. Allows the delivery of the phospholipase effector PldA to target cells where it exerts its toxicity. The chain is Type VI secretion system spike protein VgrG4b from Pseudomonas aeruginosa (strain ATCC 15692 / DSM 22644 / CIP 104116 / JCM 14847 / LMG 12228 / 1C / PRS 101 / PAO1).